An 82-amino-acid polypeptide reads, in one-letter code: Small ribosomal subunit protein bS18 (82 aa).

Residues Met1 to Cys20 are disordered.

It belongs to the bacterial ribosomal protein bS18 family. In terms of assembly, part of the 30S ribosomal subunit. Forms a tight heterodimer with protein bS6.

Its function is as follows. Binds as a heterodimer with protein bS6 to the central domain of the 16S rRNA, where it helps stabilize the platform of the 30S subunit. The protein is Small ribosomal subunit protein bS18 of Brucella suis (strain ATCC 23445 / NCTC 10510).